Here is a 915-residue protein sequence, read N- to C-terminus: Coiled-coil domain-containing protein 57 (915 aa).

Residues 1-502 (MLPLGSEPAL…MHGLPRPGAQ (502 aa)) are centrosomal targeting domain. 4 coiled-coil regions span residues 92–173 (VSEL…QRQE), 214–422 (LEAL…LERD), 456–483 (KSQV…VTLE), and 521–548 (IQRL…LSHQ). Disordered regions lie at residues 555-574 (TAAE…GDAA), 606-653 (PLKM…QAGP), and 724-915 (QHGG…NIMD). The segment at 606-915 (PLKMSSPHAE…PKIRNYNIMD (310 aa)) is microtubule binding domain. A compositionally biased stretch (polar residues) spans 613–627 (HAESQPSVRTSTETT). Low complexity predominate over residues 628–652 (GGSAQAGQAGGSVQAGQAGGSVQAG). The segment covering 745 to 758 (GREDAKSAEDEAPS) has biased composition (basic and acidic residues). 3 stretches are compositionally biased toward polar residues: residues 781 to 794 (PKTQ…TCKS), 819 to 830 (SHSSSSFASGTL), and 841 to 852 (SSPSGVTSQGDS). Low complexity predominate over residues 879-891 (KTAAQAKAKTTGA).

As to quaternary structure, interacts with CEP63; the interaction is required for their location to proximal end of centrioles. Interacts with microtubules.

Its subcellular location is the cytoplasm. The protein localises to the cytoskeleton. It is found in the microtubule organizing center. It localises to the centrosome. The protein resides in the centriolar satellite. Its subcellular location is the centriole. The protein localises to the spindle. Functionally, pleiotropic regulator of centriole duplication, mitosis, and ciliogenesis. Critical interface between centrosome and microtubule-mediated cellular processes. Centriole duplication protein required for recruitment of CEP63, CEP152, and PLK4 to the centrosome. Independent of its centrosomal targeting, localizes to and interacts with microtubules and regulates microtubule nucleation, stability, and mitotic progression. The protein is Coiled-coil domain-containing protein 57 of Homo sapiens (Human).